We begin with the raw amino-acid sequence, 865 residues long: Alanine--tRNA ligase (865 aa).

Residues His554, His558, Cys656, and His660 each coordinate Zn(2+).

This sequence belongs to the class-II aminoacyl-tRNA synthetase family. Zn(2+) serves as cofactor.

It is found in the cytoplasm. The catalysed reaction is tRNA(Ala) + L-alanine + ATP = L-alanyl-tRNA(Ala) + AMP + diphosphate. Its function is as follows. Catalyzes the attachment of alanine to tRNA(Ala) in a two-step reaction: alanine is first activated by ATP to form Ala-AMP and then transferred to the acceptor end of tRNA(Ala). Also edits incorrectly charged Ser-tRNA(Ala) and Gly-tRNA(Ala) via its editing domain. The sequence is that of Alanine--tRNA ligase from Francisella tularensis subsp. tularensis (strain FSC 198).